Reading from the N-terminus, the 292-residue chain is Poly(U)-specific endoribonuclease-B (292 aa).

An EndoU domain is found at 8–285 (VNHELSKLFN…IGTAYPALLS (278 aa)). Active-site residues include His162, His178, and Lys224.

This sequence belongs to the ENDOU family. Monomer. Requires Mn(2+) as cofactor.

The protein resides in the nucleus. It carries out the reaction uridylyl-uridylyl-ribonucleotide-RNA = a 3'-end uridylyl-2',3'-cyclophospho-uridine-RNA + a 5'-end dephospho-ribonucleoside-RNA. Functionally, poly(U)-specific endoribonuclease involved in the processing of intron-encoded box C/D snoRNAs, such as U16 and U86. Releases products that have 2',3'-cyclic phosphate termini at the 3'-end. The sequence is that of Poly(U)-specific endoribonuclease-B (endou-b) from Xenopus laevis (African clawed frog).